The following is an 889-amino-acid chain: Voltage-gated potassium channel KCNC3 (889 aa).

The important for normal N-type inactivation stretch occupies residues 1–80; the sequence is MLSSVCVWSF…CSGLPAVAMG (80 aa). Residues 1 to 291 lie on the Cytoplasmic side of the membrane; sequence MLSSVCVWSF…EDPYSSRAAR (291 aa). The tract at residues 10 to 66 is disordered; the sequence is FSGRQGTRKQHSQPAPTPQPPESSPPPLLPPPQQQCAQPGTAASPAGAPLSCGPGGR. A compositionally biased stretch (pro residues) spans 24 to 42; the sequence is APTPQPPESSPPPLLPPPQ. Zn(2+) contacts are provided by His159, Cys165, Cys186, and Cys187. The interval 202–231 is disordered; sequence DSFEAPDSSGNANANAGGAHDAGLDDEAGA. Residues 211–222 show a composition bias toward low complexity; the sequence is GNANANAGGAHD. Residues 292–310 traverse the membrane as a helical segment; it reads YVAFASLFFILISITTFCL. An N-linked (GlcNAc...) asparagine glycan is attached at Asn321. The chain crosses the membrane as a helical span at residues 352-371; the sequence is VEGVCVVWFTFEFLMRVTFC. At 372 to 380 the chain is on the cytoplasmic side; it reads PDKVEFLKS. Residues 381–399 form a helical membrane-spanning segment; sequence SLNIIDCVAILPFYLEVGL. A helical; Voltage-sensor transmembrane segment spans residues 413-435; the sequence is FLRVVRFVRILRIFKLTRHFVGL. Over 436–448 the chain is Cytoplasmic; the sequence is RVLGHTLRASTNE. A helical membrane pass occupies residues 449 to 470; that stretch reads FLLLIIFLALGVLIFATMIYYA. Thr504, Leu505, Gly506, and Tyr507 together coordinate K(+). A Selectivity filter motif is present at residues 504–509; it reads TLGYGD. The chain crosses the membrane as a helical span at residues 519–540; sequence LVGALCALAGVLTIAMPVPVIV. The Cytoplasmic segment spans residues 541–889; sequence NNFGMYYSLA…FPSRHSSPAV (349 aa). Disordered regions lie at residues 557 to 627, 691 to 834, and 852 to 889; these read PKKK…LLRG, IDQP…PQSL, and TLGF…SPAV. The residue at position 626 (Arg626) is an Omega-N-methylarginine. Ser697 and Ser702 each carry phosphoserine. Positions 748-764 are enriched in low complexity; it reads SQAPPASCPTSTPTQQP. Thr759 carries the post-translational modification Phosphothreonine. Over residues 794-808 the composition is skewed to basic residues; sequence HRSHQPPGKHQRGGR.

The protein belongs to the potassium channel family. C (Shaw) (TC 1.A.1.2) subfamily. Kv3.3/KCNC3 sub-subfamily. Homotetramer. Heterotetramer with KCNC1. Interacts (via C-terminus) with HAX1; this interaction modulates channel gating. Identified in a complex with ACTR3, a subunit of the Arp2/3 complex; this interaction is indirect and depends on the presence of HAX1. N-glycosylated. Detected on Purkinje cells in the cerebellum molecular layer (at protein level).

The protein localises to the cell membrane. Its subcellular location is the presynaptic cell membrane. It is found in the perikaryon. It localises to the cell projection. The protein resides in the axon. The protein localises to the dendrite. Its subcellular location is the dendritic spine membrane. It is found in the cytoplasm. It localises to the cell cortex. The protein resides in the cytoskeleton. It catalyses the reaction K(+)(in) = K(+)(out). Its function is as follows. Voltage-gated potassium channel that plays an important role in the rapid repolarization of fast-firing brain neurons. The channel opens in response to the voltage difference across the membrane, forming a potassium-selective channel through which potassium ions pass in accordance with their electrochemical gradient. The channel displays rapid activation and inactivation kinetics. It plays a role in the regulation of the frequency, shape and duration of action potentials in Purkinje cells. Required for normal survival of cerebellar neurons, probably via its role in regulating the duration and frequency of action potentials that in turn regulate the activity of voltage-gated Ca(2+) channels and cellular Ca(2+) homeostasis. Required for normal motor function. Plays a role in the reorganization of the cortical actin cytoskeleton and the formation of actin veil structures in neuronal growth cones via its interaction with HAX1 and the Arp2/3 complex. The sequence is that of Voltage-gated potassium channel KCNC3 from Rattus norvegicus (Rat).